The sequence spans 313 residues: Methionyl-tRNA formyltransferase (313 aa).

Residue 109–112 coordinates (6S)-5,6,7,8-tetrahydrofolate; that stretch reads SLLP.

The protein belongs to the Fmt family.

The enzyme catalyses L-methionyl-tRNA(fMet) + (6R)-10-formyltetrahydrofolate = N-formyl-L-methionyl-tRNA(fMet) + (6S)-5,6,7,8-tetrahydrofolate + H(+). In terms of biological role, attaches a formyl group to the free amino group of methionyl-tRNA(fMet). The formyl group appears to play a dual role in the initiator identity of N-formylmethionyl-tRNA by promoting its recognition by IF2 and preventing the misappropriation of this tRNA by the elongation apparatus. The protein is Methionyl-tRNA formyltransferase of Pelotomaculum thermopropionicum (strain DSM 13744 / JCM 10971 / SI).